An 805-amino-acid chain; its full sequence is Mitochondrial intermediate peptidase (805 aa).

A mitochondrion-targeting transit peptide spans 1–25 (MIQPLVKASRPRLWVCSDCLLRRTL). His-578 provides a ligand contact to Zn(2+). The active site involves Glu-579. The Zn(2+) site is built by His-582 and His-585.

It belongs to the peptidase M3 family. Zn(2+) is required as a cofactor.

The protein resides in the mitochondrion matrix. It carries out the reaction Release of an N-terminal octapeptide as second stage of processing of some proteins imported into the mitochondrion.. Its function is as follows. Cleaves proteins, imported into the mitochondrion, to their mature size. While most mitochondrial precursor proteins are processed to the mature form in one step by mitochondrial processing peptidase (MPP), the sequential cleavage by MIP of an octapeptide after initial processing by MPP is a required step for a subgroup of nuclear-encoded precursor proteins destined for the matrix or the inner membrane. This chain is Mitochondrial intermediate peptidase (oct-1), found in Neurospora crassa (strain ATCC 24698 / 74-OR23-1A / CBS 708.71 / DSM 1257 / FGSC 987).